Here is a 336-residue protein sequence, read N- to C-terminus: MAQARENVSLFFKLYCLAVMTLVAAAYTVALRYTRTTAKELYFSTTAVCVTEVIKLLISVGLLAKETGSLGRFKASLSENVLGSPKELMKLSVPSLVYAVQNNMAFLALSNLDAAVYQVTYQLKIPCTALCTVLMLNRTLSKLQWVSVFMLCGGVILVQWKPAQATKVVVEQSPLLGFGAIAIAVLCSGFAGVYFEKVLKSSDTSLWVRNIQMYLSGIVVTLVGTYLSDGAEIKEKGFFYGYTYYVWFVIFLASVGGLYTSVVVKYTDNIMKGFSAAAAIVLSTIASVMLFGLQITLSFAMGALLVCISIYLYGLPRQDTTCIQQEATSKERVIGV.

Over 1–9 the chain is Cytoplasmic; the sequence is MAQARENVS. The helical transmembrane segment at 10 to 30 threads the bilayer; the sequence is LFFKLYCLAVMTLVAAAYTVA. The Lumenal segment spans residues 31-45; it reads LRYTRTTAKELYFST. Residues 46 to 64 traverse the membrane as a helical segment; the sequence is TAVCVTEVIKLLISVGLLA. Lys-55 is a binding site for CMP-N-acetyl-beta-neuraminate. Topologically, residues 65-87 are cytoplasmic; the sequence is KETGSLGRFKASLSENVLGSPKE. Residues 88–108 traverse the membrane as a helical segment; it reads LMKLSVPSLVYAVQNNMAFLA. 101–102 is a binding site for CMP-N-acetyl-beta-neuraminate; the sequence is QN. The Lumenal segment spans residues 109–114; it reads LSNLDA. The helical transmembrane segment at 115–135 threads the bilayer; the sequence is AVYQVTYQLKIPCTALCTVLM. 117-124 lines the CMP-N-acetyl-beta-neuraminate pocket; sequence YQVTYQLK. At 136–141 the chain is on the cytoplasmic side; sequence LNRTLS. Residues 142–160 traverse the membrane as a helical segment; that stretch reads KLQWVSVFMLCGGVILVQW. The Lumenal segment spans residues 161–175; the sequence is KPAQATKVVVEQSPL. A helical membrane pass occupies residues 176 to 196; sequence LGFGAIAIAVLCSGFAGVYFE. Ser-188 lines the CMP-N-acetyl-beta-neuraminate pocket. Residues 197 to 209 are Cytoplasmic-facing; the sequence is KVLKSSDTSLWVR. 210–214 is a CMP-N-acetyl-beta-neuraminate binding site; that stretch reads NIQMY. Residues 210 to 228 traverse the membrane as a helical segment; that stretch reads NIQMYLSGIVVTLVGTYLS. Topologically, residues 229–243 are lumenal; it reads DGAEIKEKGFFYGYT. A helical membrane pass occupies residues 244–262; that stretch reads YYVWFVIFLASVGGLYTSV. Residues 263-269 are Cytoplasmic-facing; that stretch reads VVKYTDN. A helical transmembrane segment spans residues 270-288; it reads IMKGFSAAAAIVLSTIASV. Residue Lys-272 coordinates CMP-N-acetyl-beta-neuraminate. The Lumenal portion of the chain corresponds to 289–296; sequence MLFGLQIT. A helical transmembrane segment spans residues 297–315; it reads LSFAMGALLVCISIYLYGL. The Cytoplasmic portion of the chain corresponds to 316–336; sequence PRQDTTCIQQEATSKERVIGV. Residues 316–336 form a disordered region; sequence PRQDTTCIQQEATSKERVIGV.

Belongs to the nucleotide-sugar transporter family. SLC35A subfamily. Monomer.

It is found in the golgi apparatus membrane. It catalyses the reaction CMP-N-acetyl-beta-neuraminate(in) + CMP(out) = CMP-N-acetyl-beta-neuraminate(out) + CMP(in). The enzyme catalyses CMP-N-acetyl-beta-neuraminate(in) + AMP(out) = CMP-N-acetyl-beta-neuraminate(out) + AMP(in). It carries out the reaction CDP-L-ribitol(in) + CDP(out) = CDP-L-ribitol(out) + CDP(in). The catalysed reaction is UMP(out) + CMP-N-acetyl-beta-neuraminate(in) = UMP(in) + CMP-N-acetyl-beta-neuraminate(out). Its function is as follows. Transports CMP-sialic acid from the cytosol into the Golgi apparatus, functioning as an antiporter that exchanges CMP-sialic acid for CMP. Binds both CMP-sialic acid and free CMP, but has higher affinity for free CMP. Also able to exchange CMP-sialic acid for AMP and UMP. Also mediates the transport of CDP-ribitol. The chain is CMP-sialic acid transporter (SLC35A1) from Cricetulus griseus (Chinese hamster).